The chain runs to 293 residues: ATP synthase gamma chain (293 aa).

Belongs to the ATPase gamma chain family. As to quaternary structure, F-type ATPases have 2 components, CF(1) - the catalytic core - and CF(0) - the membrane proton channel. CF(1) has five subunits: alpha(3), beta(3), gamma(1), delta(1), epsilon(1). CF(0) has three main subunits: a, b and c.

It is found in the cell inner membrane. In terms of biological role, produces ATP from ADP in the presence of a proton gradient across the membrane. The gamma chain is believed to be important in regulating ATPase activity and the flow of protons through the CF(0) complex. This is ATP synthase gamma chain from Psychrobacter sp. (strain PRwf-1).